The following is a 561-amino-acid chain: Sesquiterpene synthase TPS2 (561 aa).

The interval 6–26 (ANGHSDVPSTQPPIGKQKKEI) is disordered. Positions 277, 314, 318, 455, and 458 each coordinate (2E,6E)-farnesyl diphosphate. The Mg(2+) site is built by Asp-314 and Asp-318. The DDXXD motif signature appears at 314 to 318 (DDTYD). Mg(2+) contacts are provided by Asp-458, Ser-462, and Glu-466.

It belongs to the terpene synthase family. Tpsa subfamily. Monomer. Mg(2+) serves as cofactor.

Its subcellular location is the cytoplasm. It catalyses the reaction (2E,6E)-farnesyl diphosphate = beta-ylangene + diphosphate. The catalysed reaction is (2E,6E)-farnesyl diphosphate = beta-copaene + diphosphate. The enzyme catalyses (2E,6E)-farnesyl diphosphate = beta-cubebene + diphosphate. It participates in secondary metabolite biosynthesis; terpenoid biosynthesis. Functionally, sesquiterpene synthase involved in the biosynthesis of volatile organic compounds. Mediates the conversion of (2E,6E)-farnesyl diphosphate (FPP) into beta-ylangene, beta-copaene and beta-cubebene. Does not use (2E)-geranyl diphosphate (GPP) as substrate. The sequence is that of Sesquiterpene synthase TPS2 from Cananga odorata (Ylang-ylang tree).